The chain runs to 253 residues: Probable transcriptional regulatory protein A1G_04400 (253 aa).

Residues M1 to R21 are disordered.

Belongs to the TACO1 family.

It localises to the cytoplasm. This chain is Probable transcriptional regulatory protein A1G_04400, found in Rickettsia rickettsii (strain Sheila Smith).